The sequence spans 1358 residues: Indole-3-acetaldehyde oxidase (1358 aa).

The 2Fe-2S ferredoxin-type domain maps to 11-98; sequence STVVLAVNGK…RCSVTTSEGI (88 aa). 3 residues coordinate [2Fe-2S] cluster: Cys50, Cys55, and Cys58. Residues 241–419 form the FAD-binding PCMH-type domain; the sequence is IAASGDGWYH…LSIFIPEWGS (179 aa). The segment at 532 to 559 is disordered; it reads SSAPSNIDTPNGSYTHETGSNVDSPERH. The span at 537–554 shows a compositional bias: polar residues; the sequence is NIDTPNGSYTHETGSNVD.

Belongs to the xanthine dehydrogenase family. In terms of assembly, aldehyde oxidases (AO) are homodimers and heterodimers of AO subunits. It depends on [2Fe-2S] cluster as a cofactor. The cofactor is FAD. Mo-molybdopterin serves as cofactor. Mostly expressed in roots, and, to a lower extent, in mesocotyl, leaves and coleoptile. Accumulates in apical region of maize coleoptiles (at protein level).

The protein resides in the cytoplasm. It carries out the reaction indole-3-acetaldehyde + O2 + H2O = (indol-3-yl)acetate + H2O2 + H(+). Its activity is regulated as follows. Inhibited by 2-mercaptoethanol, p-chloromercuribenzoate, and iodoacetate. Functionally, in higher plants aldehyde oxidases (AO) appear to be homo- and heterodimeric assemblies of AO subunits with probably different physiological functions. Involved in the biosynthesis of auxin from (indol-3-yl)acetaldehyde. Can also use indole-3-aldehyde and benzaldehyde as substrate. This is Indole-3-acetaldehyde oxidase (AO1) from Zea mays (Maize).